A 232-amino-acid polypeptide reads, in one-letter code: Probable metallo-hydrolase M6_Spy0554 (232 aa).

Zn(2+) contacts are provided by histidine 75, histidine 77, aspartate 79, histidine 80, histidine 155, aspartate 174, and histidine 215.

It depends on Zn(2+) as a cofactor.

This chain is Probable metallo-hydrolase M6_Spy0554, found in Streptococcus pyogenes serotype M6 (strain ATCC BAA-946 / MGAS10394).